A 197-amino-acid polypeptide reads, in one-letter code: dITP/XTP pyrophosphatase (197 aa).

Residue 8–13 (TKNKGK) participates in substrate binding. Mg(2+)-binding residues include glutamate 42 and aspartate 71. Catalysis depends on aspartate 71, which acts as the Proton acceptor. Substrate contacts are provided by residues serine 72, 154 to 157 (FGYD), lysine 177, and 182 to 183 (HR).

Belongs to the HAM1 NTPase family. As to quaternary structure, homodimer. Mg(2+) is required as a cofactor.

It catalyses the reaction XTP + H2O = XMP + diphosphate + H(+). The enzyme catalyses dITP + H2O = dIMP + diphosphate + H(+). The catalysed reaction is ITP + H2O = IMP + diphosphate + H(+). In terms of biological role, pyrophosphatase that catalyzes the hydrolysis of nucleoside triphosphates to their monophosphate derivatives, with a high preference for the non-canonical purine nucleotides XTP (xanthosine triphosphate), dITP (deoxyinosine triphosphate) and ITP. Seems to function as a house-cleaning enzyme that removes non-canonical purine nucleotides from the nucleotide pool, thus preventing their incorporation into DNA/RNA and avoiding chromosomal lesions. The protein is dITP/XTP pyrophosphatase of Oceanobacillus iheyensis (strain DSM 14371 / CIP 107618 / JCM 11309 / KCTC 3954 / HTE831).